Consider the following 450-residue polypeptide: Putative MYST-like histone acetyltransferase 1 (450 aa).

Residues 63–122 form the Tudor-knot domain; that stretch reads LEVGTRVMCRWRDQKLHPVKVIERRKSSTSSSPADYEYYVHYTEFNRRLDEWVKLEQLDL. Residues 174–445 enclose the MYST-type HAT domain; sequence TKVKNIAKIE…VDVSKLIWTP (272 aa). The C2HC MYST-type zinc-finger motif lies at 207 to 232; it reads LFFCEFCLNFMKRKEQLQRHMKKCDL. Lysine 274 carries the post-translational modification N6-acetyllysine; by autocatalysis. Acetyl-CoA is bound by residues 317 to 319 and 324 to 330; these read ILT and QRKGYGK. The Proton donor/acceptor role is filled by glutamate 350. Position 354 (serine 354) interacts with acetyl-CoA.

It belongs to the MYST (SAS/MOZ) family. In terms of processing, autoacetylation at Lys-274 is required for proper function.

It is found in the nucleus. The catalysed reaction is L-lysyl-[protein] + acetyl-CoA = N(6)-acetyl-L-lysyl-[protein] + CoA + H(+). In terms of biological role, histone acetyltransferase which may be involved in transcriptional activation. This Oryza sativa subsp. japonica (Rice) protein is Putative MYST-like histone acetyltransferase 1.